The following is a 1104-amino-acid chain: Isoleucine--tRNA ligase (1104 aa).

Positions 48-58 (PYTTGRIHLGT) match the 'HIGH' region motif. Residues 644 to 648 (KMSKS) carry the 'KMSKS' region motif. Residue lysine 647 coordinates ATP.

This sequence belongs to the class-I aminoacyl-tRNA synthetase family. IleS type 2 subfamily. As to quaternary structure, monomer. Requires Zn(2+) as cofactor.

The protein localises to the cytoplasm. It carries out the reaction tRNA(Ile) + L-isoleucine + ATP = L-isoleucyl-tRNA(Ile) + AMP + diphosphate. In terms of biological role, catalyzes the attachment of isoleucine to tRNA(Ile). As IleRS can inadvertently accommodate and process structurally similar amino acids such as valine, to avoid such errors it has two additional distinct tRNA(Ile)-dependent editing activities. One activity is designated as 'pretransfer' editing and involves the hydrolysis of activated Val-AMP. The other activity is designated 'posttransfer' editing and involves deacylation of mischarged Val-tRNA(Ile). The sequence is that of Isoleucine--tRNA ligase from Methanocella arvoryzae (strain DSM 22066 / NBRC 105507 / MRE50).